The following is a 65-amino-acid chain: Large ribosomal subunit protein bL33c (65 aa).

The protein belongs to the bacterial ribosomal protein bL33 family.

It is found in the plastid. Its subcellular location is the chloroplast. In Marchantia polymorpha (Common liverwort), this protein is Large ribosomal subunit protein bL33c (rpl33).